Consider the following 574-residue polypeptide: Septation ring formation regulator EzrA (574 aa).

At 1–7 the chain is on the extracellular side; it reads MSNGLII. The helical transmembrane segment at 8-26 threads the bilayer; that stretch reads LIIVIAVALILAYVAAVVL. Over 27 to 574 the chain is Cytoplasmic; it reads RKRNETLLDS…YEKTRENIRF (548 aa). Coiled-coil stretches lie at residues 104–141, 267–424, and 456–524; these read LKAK…EAKN, NITQ…QKVN, and ASDH…SIQE.

It belongs to the EzrA family.

It is found in the cell membrane. Its function is as follows. Negative regulator of FtsZ ring formation; modulates the frequency and position of FtsZ ring formation. Inhibits FtsZ ring formation at polar sites. Interacts either with FtsZ or with one of its binding partners to promote depolymerization. The polypeptide is Septation ring formation regulator EzrA (Streptococcus gordonii (strain Challis / ATCC 35105 / BCRC 15272 / CH1 / DL1 / V288)).